The sequence spans 84 residues: Small ribosomal subunit protein bS20 (84 aa).

It belongs to the bacterial ribosomal protein bS20 family.

Functionally, binds directly to 16S ribosomal RNA. This Latilactobacillus sakei subsp. sakei (strain 23K) (Lactobacillus sakei subsp. sakei) protein is Small ribosomal subunit protein bS20.